A 465-amino-acid chain; its full sequence is UPF0324 membrane protein CC_0425 (465 aa).

The tract at residues 97-132 (HRQPDRAPPARASEQPLRQGRRALRRRPDQRRHRPR) is disordered. Over residues 115-132 (QGRRALRRRPDQRRHRPR) the composition is skewed to basic residues. 10 helical membrane passes run 135 to 157 (AAAL…LMAV), 172 to 194 (LLAV…GAGL), 219 to 241 (AALG…GIGA), 251 to 273 (LAEA…LAAS), 286 to 308 (TALV…PPIA), 318 to 340 (AGVF…ASVS), 352 to 374 (LSRI…RTAQ), 378 to 400 (ISGL…ARGL), 405 to 427 (PALV…GAIS), and 442 to 464 (LAIL…TRIF).

This sequence belongs to the UPF0324 family.

It is found in the cell membrane. The chain is UPF0324 membrane protein CC_0425 from Caulobacter vibrioides (strain ATCC 19089 / CIP 103742 / CB 15) (Caulobacter crescentus).